The chain runs to 381 residues: tRNA pseudouridine synthase Pus10 (381 aa).

The active-site Nucleophile is Asp226.

The protein belongs to the pseudouridine synthase Pus10 family.

The enzyme catalyses uridine(54) in tRNA = pseudouridine(54) in tRNA. It catalyses the reaction uridine(55) in tRNA = pseudouridine(55) in tRNA. Its function is as follows. Responsible for synthesis of pseudouridine from uracil-54 and uracil-55 in the psi GC loop of transfer RNAs. The polypeptide is tRNA pseudouridine synthase Pus10 (Nitrosopumilus maritimus (strain SCM1)).